The sequence spans 285 residues: 2,3,4,5-tetrahydropyridine-2,6-dicarboxylate N-succinyltransferase (285 aa).

The substrate site is built by arginine 111 and aspartate 148.

Belongs to the transferase hexapeptide repeat family. In terms of assembly, homotrimer.

The protein localises to the cytoplasm. It carries out the reaction (S)-2,3,4,5-tetrahydrodipicolinate + succinyl-CoA + H2O = (S)-2-succinylamino-6-oxoheptanedioate + CoA. Its pathway is amino-acid biosynthesis; L-lysine biosynthesis via DAP pathway; LL-2,6-diaminopimelate from (S)-tetrahydrodipicolinate (succinylase route): step 1/3. In Sinorhizobium medicae (strain WSM419) (Ensifer medicae), this protein is 2,3,4,5-tetrahydropyridine-2,6-dicarboxylate N-succinyltransferase.